The following is a 100-amino-acid chain: Carboxysome shell vertex protein CcmL (100 aa).

One can recognise a BMV domain in the interval 1 to 83 (MQLAKVLGTV…LDAMVVGIID (83 aa)).

This sequence belongs to the CcmL/EutN family. CcmL subfamily. Homopentamer. Interacts with full-length CcmM.

The protein localises to the carboxysome. In terms of biological role, probably forms vertices in the carboxysome, a polyhedral inclusion where RuBisCO (ribulose bisphosphate carboxylase, rbcL-rbcS) is sequestered. Has been modeled to induce curvature upon insertion into an otherwise flat hexagonal molecular layer of CcmK subunits. This is Carboxysome shell vertex protein CcmL from Synechocystis sp. (strain ATCC 27184 / PCC 6803 / Kazusa).